Reading from the N-terminus, the 204-residue chain is Altered inheritance of mitochondria protein 20 (204 aa).

The chain crosses the membrane as a helical span at residues 6–26; the sequence is VAVGTAVGIPIAVGVIIALIF.

It belongs to the SKG1 family.

The protein resides in the vacuole membrane. Functionally, involved in cell cycle progression and surviving DNA damage. This Saccharomyces cerevisiae (strain RM11-1a) (Baker's yeast) protein is Altered inheritance of mitochondria protein 20 (AIM20).